Reading from the N-terminus, the 39-residue chain is MTRTAVLLLTLLFLVAMAASDKIKTREVCWTEEECENWE.

The first 20 residues, 1–20 (MTRTAVLLLTLLFLVAMAAS), serve as a signal peptide directing secretion. Cysteines 29 and 35 form a disulfide.

Expressed by the venom duct.

The protein resides in the secreted. In terms of biological role, probable neurotoxin. The chain is Contryphan-Cal1 from Californiconus californicus (California cone).